The primary structure comprises 327 residues: Pyruvate dehydrogenase E1 component subunit beta (327 aa).

A thiamine diphosphate-binding site is contributed by Glu60.

Heterodimer of an alpha and a beta chain. It depends on thiamine diphosphate as a cofactor.

It catalyses the reaction N(6)-[(R)-lipoyl]-L-lysyl-[protein] + pyruvate + H(+) = N(6)-[(R)-S(8)-acetyldihydrolipoyl]-L-lysyl-[protein] + CO2. In terms of biological role, the pyruvate dehydrogenase complex catalyzes the overall conversion of pyruvate to acetyl-CoA and CO(2). It contains multiple copies of three enzymatic components: pyruvate dehydrogenase (E1), dihydrolipoamide acetyltransferase (E2) and lipoamide dehydrogenase (E3). This is Pyruvate dehydrogenase E1 component subunit beta (pdhB) from Acholeplasma laidlawii.